The following is a 311-amino-acid chain: Probable manganese-dependent inorganic pyrophosphatase (311 aa).

Mn(2+) contacts are provided by H9, D13, D15, D77, H99, and D151.

The protein belongs to the PPase class C family. Homodimer. It depends on Mn(2+) as a cofactor.

Its subcellular location is the cytoplasm. It catalyses the reaction diphosphate + H2O = 2 phosphate + H(+). The sequence is that of Probable manganese-dependent inorganic pyrophosphatase (ppaC) from Streptococcus gordonii (strain Challis / ATCC 35105 / BCRC 15272 / CH1 / DL1 / V288).